Reading from the N-terminus, the 710-residue chain is Prolyl endopeptidase (710 aa).

N-acetylmethionine is present on Met-1. Lys-157 is subject to N6-acetyllysine. Catalysis depends on charge relay system residues Ser-554, Asp-641, and His-680.

Belongs to the peptidase S9A family. The N-terminus is blocked. In terms of tissue distribution, ubiquitous.

The protein localises to the cytoplasm. The catalysed reaction is Hydrolysis of Pro-|-Xaa &gt;&gt; Ala-|-Xaa in oligopeptides.. In terms of biological role, cleaves peptide bonds on the C-terminal side of prolyl residues within peptides that are up to approximately 30 amino acids long. This Sus scrofa (Pig) protein is Prolyl endopeptidase (PREP).